A 668-amino-acid polypeptide reads, in one-letter code: Spindle assembly abnormal protein 6 homolog (668 aa).

The region spanning 39–91 is the PISA domain; sequence VHKKELVVRLSDDTDPFFLYNLTLGEEDFQSLKNQQGLLVEFSAFPQRFIDLL. Residues 182–482 adopt a coiled-coil conformation; that stretch reads LGVTQQALAE…NVIAWLNKQL (301 aa). A disordered region spans residues 623 to 668; the sequence is GSVPVKGQRNGSSAGTVPVRPALPKSGSSPILSAYFPGQQSRLPAS.

In terms of assembly, nine homodimers form a cartwheel structure with an internal diameter of 23 nM and radial spokes connecting to the microtubule triplets.

It is found in the cytoplasm. It localises to the cytoskeleton. Its subcellular location is the microtubule organizing center. The protein resides in the centrosome. In terms of biological role, central scaffolding component of the centrioles ensuring their 9-fold symmetry. Required for centrosome biogenesis and duplication: required both for mother-centriole-dependent centriole duplication and deuterosome-dependent centriole amplification in multiciliated cells. This is Spindle assembly abnormal protein 6 homolog (sas6) from Xenopus laevis (African clawed frog).